We begin with the raw amino-acid sequence, 119 residues long: Holo-[acyl-carrier-protein] synthase (119 aa).

Mg(2+) is bound by residues Asp-8 and Glu-58.

The protein belongs to the P-Pant transferase superfamily. AcpS family. Requires Mg(2+) as cofactor.

Its subcellular location is the cytoplasm. The enzyme catalyses apo-[ACP] + CoA = holo-[ACP] + adenosine 3',5'-bisphosphate + H(+). Transfers the 4'-phosphopantetheine moiety from coenzyme A to a Ser of acyl-carrier-protein. This chain is Holo-[acyl-carrier-protein] synthase, found in Streptococcus mutans serotype c (strain ATCC 700610 / UA159).